The chain runs to 298 residues: 33 kDa chaperonin (298 aa).

2 cysteine pairs are disulfide-bonded: cysteine 237–cysteine 239 and cysteine 270–cysteine 273.

The protein belongs to the HSP33 family. Post-translationally, under oxidizing conditions two disulfide bonds are formed involving the reactive cysteines. Under reducing conditions zinc is bound to the reactive cysteines and the protein is inactive.

Its subcellular location is the cytoplasm. Functionally, redox regulated molecular chaperone. Protects both thermally unfolding and oxidatively damaged proteins from irreversible aggregation. Plays an important role in the bacterial defense system toward oxidative stress. This Enterococcus faecalis (strain ATCC 700802 / V583) protein is 33 kDa chaperonin.